A 160-amino-acid polypeptide reads, in one-letter code: N-acetyltransferase Pat (160 aa).

One can recognise an N-acetyltransferase domain in the interval 5–148 (IKIRKATKED…VYGEMRLTER (144 aa)). CoA is bound by residues Leu79, Val81, Thr87, Gly89, Gly91, Thr92, Asn118, Lys123, and Lys127.

Belongs to the acetyltransferase family. GNAT subfamily.

The catalysed reaction is L-lysyl-[protein] + acetyl-CoA = N(6)-acetyl-L-lysyl-[protein] + CoA + H(+). Its function is as follows. Modulates activity of albA1, the major archaeal DNA compaction protein, by decreasing albA1's nucleic acid binding affinity through acetylation of 'Lys-16'. This is N-acetyltransferase Pat from Saccharolobus solfataricus (strain ATCC 35092 / DSM 1617 / JCM 11322 / P2) (Sulfolobus solfataricus).